Reading from the N-terminus, the 456-residue chain is Bifunctional protein GlmU (456 aa).

The interval 1 to 228 (MTLPLHVLIL…PQDVEGANDP (228 aa)) is pyrophosphorylase. Residues 10–13 (LAAG), lysine 24, glutamine 76, 81–82 (GT), 103–105 (YGD), glycine 138, glutamate 153, asparagine 168, and asparagine 226 contribute to the UDP-N-acetyl-alpha-D-glucosamine site. Aspartate 105 serves as a coordination point for Mg(2+). Asparagine 226 serves as a coordination point for Mg(2+). The linker stretch occupies residues 229 to 249 (WQLAQLERAWQLRAARTLCLQ). An N-acetyltransferase region spans residues 250 to 456 (GVRMADPARV…GWKRPTKKSP (207 aa)). Residues arginine 332 and lysine 350 each coordinate UDP-N-acetyl-alpha-D-glucosamine. The Proton acceptor role is filled by histidine 362. 2 residues coordinate UDP-N-acetyl-alpha-D-glucosamine: tyrosine 365 and asparagine 376. Acetyl-CoA is bound by residues alanine 379, 385 to 386 (NY), serine 404, alanine 422, and arginine 439.

This sequence in the N-terminal section; belongs to the N-acetylglucosamine-1-phosphate uridyltransferase family. The protein in the C-terminal section; belongs to the transferase hexapeptide repeat family. In terms of assembly, homotrimer. Mg(2+) is required as a cofactor.

The protein localises to the cytoplasm. The catalysed reaction is alpha-D-glucosamine 1-phosphate + acetyl-CoA = N-acetyl-alpha-D-glucosamine 1-phosphate + CoA + H(+). It carries out the reaction N-acetyl-alpha-D-glucosamine 1-phosphate + UTP + H(+) = UDP-N-acetyl-alpha-D-glucosamine + diphosphate. The protein operates within nucleotide-sugar biosynthesis; UDP-N-acetyl-alpha-D-glucosamine biosynthesis; N-acetyl-alpha-D-glucosamine 1-phosphate from alpha-D-glucosamine 6-phosphate (route II): step 2/2. It participates in nucleotide-sugar biosynthesis; UDP-N-acetyl-alpha-D-glucosamine biosynthesis; UDP-N-acetyl-alpha-D-glucosamine from N-acetyl-alpha-D-glucosamine 1-phosphate: step 1/1. It functions in the pathway bacterial outer membrane biogenesis; LPS lipid A biosynthesis. Its function is as follows. Catalyzes the last two sequential reactions in the de novo biosynthetic pathway for UDP-N-acetylglucosamine (UDP-GlcNAc). The C-terminal domain catalyzes the transfer of acetyl group from acetyl coenzyme A to glucosamine-1-phosphate (GlcN-1-P) to produce N-acetylglucosamine-1-phosphate (GlcNAc-1-P), which is converted into UDP-GlcNAc by the transfer of uridine 5-monophosphate (from uridine 5-triphosphate), a reaction catalyzed by the N-terminal domain. This Xanthomonas axonopodis pv. citri (strain 306) protein is Bifunctional protein GlmU.